Here is a 499-residue protein sequence, read N- to C-terminus: Cytochrome P450 81E8 (499 aa).

The helical transmembrane segment at 3 to 23 (TFYLSLIISLFFLIITLKVFF) threads the bilayer. Cys436 contacts heme.

Belongs to the cytochrome P450 family. Requires heme as cofactor.

The protein localises to the membrane. Its function is as follows. Probable monooxygenases exhibiting no activity with isoflavones such as formononetin, biochanin A, pseudobaptigenin, daidzein, genistein, isoformononetin and prunetin, or with flavonoids including naringenin, liquiritigenin, apigenin, luteolin, or kaempferol. This is Cytochrome P450 81E8 from Medicago truncatula (Barrel medic).